The sequence spans 1339 residues: Receptor tyrosine-protein kinase erbB-3 (1339 aa).

The first 19 residues, 1–19, serve as a signal peptide directing secretion; the sequence is MRATGTLQVLCFLLSLARG. Topologically, residues 20 to 643 are extracellular; the sequence is SEMGNSQAVC…EVLMSKPHLV (624 aa). N-linked (GlcNAc...) asparagine glycosylation occurs at N126. Cystine bridges form between C186-C194, C190-C202, C210-C218, C214-C226, C227-C235, C231-C243, C246-C255, C259-C286, C290-C301, C305-C320, and C323-C327. N250 carries N-linked (GlcNAc...) asparagine glycosylation. N-linked (GlcNAc...) asparagine glycosylation is found at N353, N408, N414, N437, and N469. Intrachain disulfides connect C500–C509, C504–C517, C520–C529, C533–C549, C552–C565, C556–C573, C576–C585, C589–C610, C613–C621, and C617–C629. Residue N522 is glycosylated (N-linked (GlcNAc...) asparagine). N566 carries an N-linked (GlcNAc...) asparagine glycan. The N-linked (GlcNAc...) asparagine glycan is linked to N616. Residues 644-662 form a helical membrane-spanning segment; sequence IAVTVGLAVILMILGGSFL. Over 663–1339 the chain is Cytoplasmic; that stretch reads YWRGRRIQNK…LFPKANAQRT (677 aa). A Phosphoserine modification is found at S684. The Protein kinase domain maps to 707–964; the sequence is LRKLKVLGSG…TFKELANEFT (258 aa). Residues 713–721, K740, 786–788, and 832–837 each bind ATP; these read LGSGVFGTV, QYL, and DLALRN. D832 (proton acceptor) is an active-site residue. A Phosphoserine modification is found at S980. Residues 1023–1036 show a composition bias toward low complexity; it reads SLGSALSLPTGTLT. 2 disordered regions span residues 1023 to 1052 and 1078 to 1215; these read SLGS…SGYM and PISL…GSLE. Residues 1039 to 1052 are compositionally biased toward polar residues; it reads RGSQSLLSPSSGYM. The span at 1172 to 1184 shows a compositional bias: low complexity; sequence GTLSSVGLSSVLG. Residues 1185 to 1195 show a composition bias toward acidic residues; that stretch reads TEEEDEDEEYE.

Belongs to the protein kinase superfamily. Tyr protein kinase family. EGF receptor subfamily. Monomer and homodimer. Heterodimer with each of the other ERBB receptors (Potential). Interacts with CSPG5, PA2G4, GRB7, MYOC and MUC1. Found in a ternary complex with NRG1 and ITGAV:ITGB3 or ITGA6:ITGB4. Autophosphorylated. Ligand-binding increases phosphorylation on tyrosine residues and promotes its association with the p85 subunit of phosphatidylinositol 3-kinase.

It is found in the membrane. The enzyme catalyses L-tyrosyl-[protein] + ATP = O-phospho-L-tyrosyl-[protein] + ADP + H(+). Tyrosine-protein kinase that plays an essential role as cell surface receptor for neuregulins. Binds to neuregulin-1 (NRG1) and is activated by it; ligand-binding increases phosphorylation on tyrosine residues and promotes its association with the p85 subunit of phosphatidylinositol 3-kinase. May also be activated by CSPG5. Involved in the regulation of myeloid cell differentiation. This is Receptor tyrosine-protein kinase erbB-3 (Erbb3) from Rattus norvegicus (Rat).